The chain runs to 143 residues: Small ribosomal subunit protein eS19x (143 aa).

It belongs to the eukaryotic ribosomal protein eS19 family.

The polypeptide is Small ribosomal subunit protein eS19x (RPS19C) (Arabidopsis thaliana (Mouse-ear cress)).